A 249-amino-acid polypeptide reads, in one-letter code: Adapter protein MecA (249 aa).

The protein belongs to the MecA family. In terms of assembly, homodimer.

Functionally, enables the recognition and targeting of unfolded and aggregated proteins to the ClpC protease or to other proteins involved in proteolysis. This chain is Adapter protein MecA, found in Streptococcus thermophilus (strain ATCC BAA-250 / LMG 18311).